Reading from the N-terminus, the 100-residue chain is Small ribosomal subunit protein uS14c (100 aa).

The protein belongs to the universal ribosomal protein uS14 family. Part of the 30S ribosomal subunit.

The protein resides in the plastid. Its subcellular location is the chloroplast. In terms of biological role, binds 16S rRNA, required for the assembly of 30S particles. In Cicer arietinum (Chickpea), this protein is Small ribosomal subunit protein uS14c.